The sequence spans 192 residues: Protein GrpE (192 aa).

Over residues 1-20 (MEERNEQVVEEVKEEVKEAQ) the composition is skewed to basic and acidic residues. The interval 1-34 (MEERNEQVVEEVKEEVKEAQVEEAVTSEDSEETV) is disordered. A compositionally biased stretch (acidic residues) spans 25–34 (VTSEDSEETV).

This sequence belongs to the GrpE family. As to quaternary structure, homodimer.

The protein localises to the cytoplasm. Participates actively in the response to hyperosmotic and heat shock by preventing the aggregation of stress-denatured proteins, in association with DnaK and GrpE. It is the nucleotide exchange factor for DnaK and may function as a thermosensor. Unfolded proteins bind initially to DnaJ; upon interaction with the DnaJ-bound protein, DnaK hydrolyzes its bound ATP, resulting in the formation of a stable complex. GrpE releases ADP from DnaK; ATP binding to DnaK triggers the release of the substrate protein, thus completing the reaction cycle. Several rounds of ATP-dependent interactions between DnaJ, DnaK and GrpE are required for fully efficient folding. This chain is Protein GrpE, found in Bacillus cereus (strain AH187).